Here is a 217-residue protein sequence, read N- to C-terminus: Imidazole glycerol phosphate synthase subunit HisH (217 aa).

In terms of domain architecture, Glutamine amidotransferase type-1 spans 6–214 (QIAVVDYDMG…VTQVAAAQLQ (209 aa)). The active-site Nucleophile is the Cys-84. Residues His-189 and Glu-191 contribute to the active site.

Heterodimer of HisH and HisF.

It localises to the cytoplasm. The catalysed reaction is 5-[(5-phospho-1-deoxy-D-ribulos-1-ylimino)methylamino]-1-(5-phospho-beta-D-ribosyl)imidazole-4-carboxamide + L-glutamine = D-erythro-1-(imidazol-4-yl)glycerol 3-phosphate + 5-amino-1-(5-phospho-beta-D-ribosyl)imidazole-4-carboxamide + L-glutamate + H(+). The enzyme catalyses L-glutamine + H2O = L-glutamate + NH4(+). The protein operates within amino-acid biosynthesis; L-histidine biosynthesis; L-histidine from 5-phospho-alpha-D-ribose 1-diphosphate: step 5/9. Functionally, IGPS catalyzes the conversion of PRFAR and glutamine to IGP, AICAR and glutamate. The HisH subunit catalyzes the hydrolysis of glutamine to glutamate and ammonia as part of the synthesis of IGP and AICAR. The resulting ammonia molecule is channeled to the active site of HisF. The polypeptide is Imidazole glycerol phosphate synthase subunit HisH (Synechococcus sp. (strain ATCC 27144 / PCC 6301 / SAUG 1402/1) (Anacystis nidulans)).